Here is a 245-residue protein sequence, read N- to C-terminus: Polynucleotide 3'-phosphatase (245 aa).

This sequence belongs to the DNA 3' phosphatase family.

The protein resides in the nucleus. The enzyme catalyses a 3'end (2'-deoxyribonucleotide 3'-phosphate)-DNA + H2O = a 3'-end 2'-deoxyribonucleotide-DNA + phosphate. Dephosphorylate DNA's 3'-phosphate termini. Has a role in the repair of breaks in single-stranded DNA. The sequence is that of Polynucleotide 3'-phosphatase (TPP1) from Saccharomyces mikatae (Yeast).